Reading from the N-terminus, the 298-residue chain is UDP-3-O-acyl-N-acetylglucosamine deacetylase (298 aa).

Zn(2+) is bound by residues His-79, His-239, and Asp-243. His-266 functions as the Proton donor in the catalytic mechanism.

The protein belongs to the LpxC family. The cofactor is Zn(2+).

It catalyses the reaction a UDP-3-O-[(3R)-3-hydroxyacyl]-N-acetyl-alpha-D-glucosamine + H2O = a UDP-3-O-[(3R)-3-hydroxyacyl]-alpha-D-glucosamine + acetate. It participates in glycolipid biosynthesis; lipid IV(A) biosynthesis; lipid IV(A) from (3R)-3-hydroxytetradecanoyl-[acyl-carrier-protein] and UDP-N-acetyl-alpha-D-glucosamine: step 2/6. In terms of biological role, catalyzes the hydrolysis of UDP-3-O-myristoyl-N-acetylglucosamine to form UDP-3-O-myristoylglucosamine and acetate, the committed step in lipid A biosynthesis. The chain is UDP-3-O-acyl-N-acetylglucosamine deacetylase from Wigglesworthia glossinidia brevipalpis.